A 453-amino-acid chain; its full sequence is MMQTVLAKIVADKAIWVEARKQQQPLASFQNEVQPSTRHFYDALQGARTAFILECKKASPSKGVIRDDFDPARIAAIYKHYASAISVLTDEKYFQGSFNFLPIVSQIAPQPILCKDFIIDPYQIYLARYYQADACLLMLSVLDDDQYRQLAAVAHSLEMGVLTEVSNEEEQERAIALGAKVVGINNRDLRDLSIDLNRTRELAPKLGHNVTVISESGINTYAQVRELSHFANGFLIGSALMAHDDLHAAVRRVLLGENKVCGLTRGQDAKAAYDAGAIYGGLIFVATSPRCVNVEQAQEVMAAAPLQYVGVFRNHDIADVVDKAKVLSLAAVQLHGNEEQLYIDTLREALPAHVAIWKALSVGETLPAREFQHVDKYVLDNGQGGSGQRFDWSLLNGQSLGNVLLAGGLGADNCVEAAQTGCAGLDFNSAVESQPGIKDARLLASVFQTLRAY.

The tract at residues 1–257 (MMQTVLAKIV…AAVRRVLLGE (257 aa)) is indole-3-glycerol phosphate synthase. Residues 258-453 (NKVCGLTRGQ…ASVFQTLRAY (196 aa)) are N-(5'-phosphoribosyl)anthranilate isomerase.

In the N-terminal section; belongs to the TrpC family. This sequence in the C-terminal section; belongs to the TrpF family. As to quaternary structure, monomer.

It carries out the reaction N-(5-phospho-beta-D-ribosyl)anthranilate = 1-(2-carboxyphenylamino)-1-deoxy-D-ribulose 5-phosphate. The catalysed reaction is 1-(2-carboxyphenylamino)-1-deoxy-D-ribulose 5-phosphate + H(+) = (1S,2R)-1-C-(indol-3-yl)glycerol 3-phosphate + CO2 + H2O. It functions in the pathway amino-acid biosynthesis; L-tryptophan biosynthesis; L-tryptophan from chorismate: step 3/5. Its pathway is amino-acid biosynthesis; L-tryptophan biosynthesis; L-tryptophan from chorismate: step 4/5. Bifunctional enzyme that catalyzes two sequential steps of tryptophan biosynthetic pathway. The first reaction is catalyzed by the isomerase, coded by the TrpF domain; the second reaction is catalyzed by the synthase, coded by the TrpC domain. The protein is Tryptophan biosynthesis protein TrpCF (trpC) of Escherichia coli (strain K12).